The chain runs to 867 residues: Cation/H(+) antiporter 23, chloroplastic (867 aa).

The next 12 membrane-spanning stretches (helical) occupy residues 43 to 63 (SGST…VANL), 75 to 95 (LYLP…PSVL), 112 to 132 (MVLE…LGLG), 146 to 166 (VIIA…LYYL), 175 to 195 (IISG…PDLA), 212 to 232 (AMCA…FGFA), 242 to 262 (KMMP…IFVI), 283 to 303 (HVWF…ACGV), 336 to 356 (GILM…GFML), 362 to 382 (FMMV…TVIT), 393 to 413 (AFAI…VLNA), and 427 to 447 (HMTI…AFAY). The disordered stretch occupies residues 848-867 (SMYEDEDEDDEEDHQYGIHR). Residues 851–860 (EDEDEDDEED) are compositionally biased toward acidic residues.

It belongs to the monovalent cation:proton antiporter 2 (CPA2) transporter (TC 2.A.37) family. CHX (TC 2.A.37.4) subfamily. Specifically expressed in flower buds and pollen. Expressed in leaves, roots and stems.

The protein localises to the plastid. The protein resides in the chloroplast membrane. It localises to the endoplasmic reticulum membrane. Operates as a K(+)/H(+) antiporter or Na(+)/H(+) antiporter of the chloroplast envelope that functions in pH homeostasis and chloroplast development. Monovalent cation transporter with a preference for Cs(+), K(+) and Rb(+) relative to Na(+) or Li(+). Required for pollen tube guidance, but not for normal pollen development. May also be involved in the development or function of the female gametophyte. The sequence is that of Cation/H(+) antiporter 23, chloroplastic (CHX23) from Arabidopsis thaliana (Mouse-ear cress).